The following is a 296-amino-acid chain: N-acetylmuramic acid 6-phosphate etherase 2 (296 aa).

The region spanning 55–218 (IVANFKAGGR…STASMVGIGK (164 aa)) is the SIS domain. Glu83 (proton donor) is an active-site residue. Glu114 is a catalytic residue.

It belongs to the GCKR-like family. MurNAc-6-P etherase subfamily. Homodimer.

It carries out the reaction N-acetyl-D-muramate 6-phosphate + H2O = N-acetyl-D-glucosamine 6-phosphate + (R)-lactate. It participates in amino-sugar metabolism; N-acetylmuramate degradation. Its function is as follows. Specifically catalyzes the cleavage of the D-lactyl ether substituent of MurNAc 6-phosphate, producing GlcNAc 6-phosphate and D-lactate. This chain is N-acetylmuramic acid 6-phosphate etherase 2, found in Lactiplantibacillus plantarum (strain ATCC BAA-793 / NCIMB 8826 / WCFS1) (Lactobacillus plantarum).